The primary structure comprises 275 residues: NH(3)-dependent NAD(+) synthetase (275 aa).

Gly-47–Ser-54 lines the ATP pocket. Asp-53 is a Mg(2+) binding site. Arg-141 contributes to the deamido-NAD(+) binding site. Thr-161 is a binding site for ATP. Glu-166 provides a ligand contact to Mg(2+). Positions 174 and 181 each coordinate deamido-NAD(+). ATP is bound by residues Lys-190 and Thr-212. Residue His-261 to Lys-262 coordinates deamido-NAD(+).

The protein belongs to the NAD synthetase family. As to quaternary structure, homodimer.

The enzyme catalyses deamido-NAD(+) + NH4(+) + ATP = AMP + diphosphate + NAD(+) + H(+). It participates in cofactor biosynthesis; NAD(+) biosynthesis; NAD(+) from deamido-NAD(+) (ammonia route): step 1/1. Functionally, catalyzes the ATP-dependent amidation of deamido-NAD to form NAD. Uses ammonia as a nitrogen source. This Oceanobacillus iheyensis (strain DSM 14371 / CIP 107618 / JCM 11309 / KCTC 3954 / HTE831) protein is NH(3)-dependent NAD(+) synthetase.